The following is a 453-amino-acid chain: Bifunctional protein GlmU (453 aa).

Residues 1–226 (MKFSTVILAA…SIEVEGVNDR (226 aa)) are pyrophosphorylase. UDP-N-acetyl-alpha-D-glucosamine-binding positions include 8-11 (LAAG), Lys-22, Gln-73, 78-79 (GT), 100-102 (YGD), Gly-137, Glu-151, Asn-166, and Asn-224. Residue Asp-102 coordinates Mg(2+). Asn-224 is a Mg(2+) binding site. Residues 227-247 (IQLARLERAFQARQAKKLLEQ) are linker. The N-acetyltransferase stretch occupies residues 248 to 453 (GVMLRDPARF…AGWQRPAKKK (206 aa)). UDP-N-acetyl-alpha-D-glucosamine-binding residues include Arg-330 and Lys-348. His-360 (proton acceptor) is an active-site residue. Residues Tyr-363 and Asn-374 each contribute to the UDP-N-acetyl-alpha-D-glucosamine site. Acetyl-CoA contacts are provided by residues Ala-377, 383–384 (NY), Ser-402, Ala-420, and Arg-437.

This sequence in the N-terminal section; belongs to the N-acetylglucosamine-1-phosphate uridyltransferase family. It in the C-terminal section; belongs to the transferase hexapeptide repeat family. Homotrimer. Mg(2+) is required as a cofactor.

The protein resides in the cytoplasm. The catalysed reaction is alpha-D-glucosamine 1-phosphate + acetyl-CoA = N-acetyl-alpha-D-glucosamine 1-phosphate + CoA + H(+). It carries out the reaction N-acetyl-alpha-D-glucosamine 1-phosphate + UTP + H(+) = UDP-N-acetyl-alpha-D-glucosamine + diphosphate. It functions in the pathway nucleotide-sugar biosynthesis; UDP-N-acetyl-alpha-D-glucosamine biosynthesis; N-acetyl-alpha-D-glucosamine 1-phosphate from alpha-D-glucosamine 6-phosphate (route II): step 2/2. The protein operates within nucleotide-sugar biosynthesis; UDP-N-acetyl-alpha-D-glucosamine biosynthesis; UDP-N-acetyl-alpha-D-glucosamine from N-acetyl-alpha-D-glucosamine 1-phosphate: step 1/1. Its pathway is bacterial outer membrane biogenesis; LPS lipid A biosynthesis. Catalyzes the last two sequential reactions in the de novo biosynthetic pathway for UDP-N-acetylglucosamine (UDP-GlcNAc). The C-terminal domain catalyzes the transfer of acetyl group from acetyl coenzyme A to glucosamine-1-phosphate (GlcN-1-P) to produce N-acetylglucosamine-1-phosphate (GlcNAc-1-P), which is converted into UDP-GlcNAc by the transfer of uridine 5-monophosphate (from uridine 5-triphosphate), a reaction catalyzed by the N-terminal domain. This chain is Bifunctional protein GlmU, found in Vibrio cholerae serotype O1 (strain ATCC 39541 / Classical Ogawa 395 / O395).